The sequence spans 925 residues: Probable disease resistance protein At1g61310 (925 aa).

Positions 25-69 (GKSYIRTLEKNLRALQREMEDLRATQHEVQNKVAREESRHQQRLE) form a coiled coil. Residues 134–154 (NFDEVSQPPPRSEVEERPTQP) are disordered. The NB-ARC domain occupies 139–442 (SQPPPRSEVE…CEGFIGEDQV (304 aa)). An ATP-binding site is contributed by 181 to 188 (GMGGVGKT). 6 LRR repeats span residues 525–546 (AVRR…SKCS), 547–568 (ELTT…FIRY), 571–594 (KLVV…SGLV), 595–617 (SLQY…KELK), 618–640 (KLTF…SRLL), and 641–663 (SLRV…KELQ).

This sequence belongs to the disease resistance NB-LRR family.

Probable disease resistance protein. In Arabidopsis thaliana (Mouse-ear cress), this protein is Probable disease resistance protein At1g61310.